We begin with the raw amino-acid sequence, 959 residues long: Bifunctional premutilin synthase (959 aa).

A class II diterpene cyclase region spans residues 1 to 542 (MGLSEDLHAR…ALNVPIPRFD (542 aa)). The DXDD motif signature appears at 309-312 (DADM). Asp311 serves as the catalytic For class II diterpene cyclase activity. Positions 543-959 (PASITTLPPI…TANGSNGIHH (417 aa)) are class I diterpene synthase. Asp649 serves as the catalytic For class I diterpene synthase activity. Mg(2+)-binding residues include Asp649, Asp653, and Asn824. The DDXXD motif motif lies at 649–653 (DDYLD). A disordered region spans residues 931–959 (KGANGVKKTNGLTTNGTKATANGSNGIHH). Residues 934 to 959 (NGVKKTNGLTTNGTKATANGSNGIHH) are compositionally biased toward low complexity.

It belongs to the terpene synthase family. It depends on Mg(2+) as a cofactor.

It functions in the pathway secondary metabolite biosynthesis; terpenoid biosynthesis. Its function is as follows. Bifunctional premutilin synthase; part of the gene cluster that mediates the biosynthesis of pleuromutilin, a tricyclic diterpene showing antibacterial properties. The geranylgeranyl diphosphate (GGPP) synthase ple4 catalyzes the first step in pleuromutilin biosynthesis. GGPP is then substrate of the premutilin synthase (PS) ple3 to yield premutilin. Premutilin synthase is a bifunctional enzyme composed of the fusion of a class II diterpene cyclase (DTC) and a class I diterpene synthase (DTS), with the corresponding domains and active sites containing characteristic aspartate-rich motifs. GGPP is first converted to mutildienyl-diphosphate (MPP) at the class II DTC site. MPP is subsequently further cyclized at the class I DTS site, followed by a 1,5-hydride shift and addition of water prior to terminating deprotonation, to yield premutilin. The cytochrome P450 monooxygenases ple5 and ple6 hydroxylate premutilin at C-11 and C-3, respectively, producing 11-hydroxypremutilin and 3-hydroxypremutilin. The combination of the actions of both ple5 and ple6 leads to the production of 3,11-dihydroxypremutilin. The short chain dehydrogenase ple7 further converts 3,11-dihydroxypremutilin into mutilin. The acetyltransferase ple2 then acetylates mutilin to produce 14-O-acetylmutilin. Finally, the cytochrome P450 monooxygenase ple1 catalyzes hydroxylation on the alpha position of the acetyl side chain of 14-O-acetylmutilin to yield pleuromutilin. This is Bifunctional premutilin synthase from Rhodocybe pseudopiperita (Clitopilus pseudopiperitus).